The chain runs to 575 residues: Phosphoenolpyruvate-protein phosphotransferase (575 aa).

Catalysis depends on His-191, which acts as the Tele-phosphohistidine intermediate. Positions 298 and 334 each coordinate phosphoenolpyruvate. Residues Glu-435 and Asp-459 each coordinate Mg(2+). Phosphoenolpyruvate is bound by residues 458–459 (ND) and Arg-469. Cys-506 functions as the Proton donor in the catalytic mechanism.

The protein belongs to the PEP-utilizing enzyme family. As to quaternary structure, homodimer. It depends on Mg(2+) as a cofactor.

The protein resides in the cytoplasm. The enzyme catalyses L-histidyl-[protein] + phosphoenolpyruvate = N(pros)-phospho-L-histidyl-[protein] + pyruvate. Functionally, general (non sugar-specific) component of the phosphoenolpyruvate-dependent sugar phosphotransferase system (sugar PTS). This major carbohydrate active-transport system catalyzes the phosphorylation of incoming sugar substrates concomitantly with their translocation across the cell membrane. Enzyme I transfers the phosphoryl group from phosphoenolpyruvate (PEP) to the phosphoryl carrier protein (HPr). The chain is Phosphoenolpyruvate-protein phosphotransferase (ptsI) from Lactococcus lactis subsp. lactis (strain IL1403) (Streptococcus lactis).